The sequence spans 156 residues: Cyanate hydratase (156 aa).

Active-site residues include arginine 96, glutamate 99, and serine 122.

The protein belongs to the cyanase family.

The enzyme catalyses cyanate + hydrogencarbonate + 3 H(+) = NH4(+) + 2 CO2. Its function is as follows. Catalyzes the reaction of cyanate with bicarbonate to produce ammonia and carbon dioxide. This is Cyanate hydratase from Escherichia coli (strain K12 / DH10B).